The following is a 614-amino-acid chain: FAD-linked oxidoreductase ffsJ (614 aa).

Positions 1–19 (MRLTRALTPAILALPAAHA) are cleaved as a signal peptide. Asn30, Asn53, Asn72, and Asn114 each carry an N-linked (GlcNAc...) asparagine glycan. One can recognise an FAD-binding PCMH-type domain in the interval 119 to 301 (TGSLPAYYID…LSSTHRVEPE (183 aa)). 6 N-linked (GlcNAc...) asparagine glycosylation sites follow: Asn314, Asn329, Asn461, Asn465, Asn478, and Asn514. The tract at residues 453–495 (NGHGRSNNNNSNNSSTSTSTSTSSKNGSVKPYAYGGKETTSST) is disordered. The span at 456–480 (GRSNNNNSNNSSTSTSTSTSSKNGS) shows a compositional bias: low complexity.

This sequence belongs to the oxygen-dependent FAD-linked oxidoreductase family. Requires FAD as cofactor.

It functions in the pathway mycotoxin biosynthesis. In terms of biological role, FAD-linked oxidoreductase; part of the gene cluster that mediates the biosynthesis of the cytotoxic leucine-containing cytochalasans, including aspochalasin C, aspochalasin E, TMC-169, flavichalasine F, aspergillin PZ, aspochalasin M and flavichalasine G. The first step in the pathway is catalyzed by the hybrid PKS-NRPS ffsA that utilizes 8 units of malonyl-CoA to iteratively assemble the octaketide chain before addition of L-leucine by the C-terminal NRPS modules. Because ffsA lacks a designated enoylreductase (ER) domain, the required activity is provided the enoyl reductase fssC. The methyltransferase (MT) domain of ffsA catalyzes the alpha-methylation at C10 and C14 using S-adenosyl-L-methionine as the methyl-donating cosubstrate. Reduction by the hydrolyase ffsE, followed by dehydration and intra-molecular Diels-Alder cyclization by the Diels-Alderase ffsF then yield the required isoindolone-fused macrocycle. A number of oxidative steps catalyzed by the tailoring cytochrome P450 monooxygenase ffsD, the FAD-linked oxidoreductase ffsJ and the short-chain dehydrogenase/reductase ffsI, are further required to afford the final products. The protein is FAD-linked oxidoreductase ffsJ of Aspergillus flavipes.